A 545-amino-acid chain; its full sequence is Indole-3-pyruvate decarboxylase (545 aa).

Residue Glu48 coordinates thiamine diphosphate. The thiamine pyrophosphate binding stretch occupies residues Asp382–Glu460. Residues Asp429 and Asn456 each coordinate Mg(2+).

Belongs to the TPP enzyme family. The cofactor is a metal cation. Thiamine diphosphate is required as a cofactor.

It carries out the reaction indole-3-pyruvate + H(+) = indole-3-acetaldehyde + CO2. Its pathway is plant hormone metabolism; auxin biosynthesis. The polypeptide is Indole-3-pyruvate decarboxylase (ipdC) (Azospirillum brasilense).